A 64-amino-acid chain; its full sequence is Large ribosomal subunit protein bL35 (64 aa).

Composition is skewed to basic residues over residues 1–15 (MPKA…KRFR) and 23–42 (VRQK…KRTR). A disordered region spans residues 1–45 (MPKAKTHSGASKRFRTTGSGKVVRQKANRRHLLEHKPTKRTRRLD).

The protein belongs to the bacterial ribosomal protein bL35 family.

The polypeptide is Large ribosomal subunit protein bL35 (Mycolicibacterium vanbaalenii (strain DSM 7251 / JCM 13017 / BCRC 16820 / KCTC 9966 / NRRL B-24157 / PYR-1) (Mycobacterium vanbaalenii)).